The following is a 918-amino-acid chain: MFSSITSKLSAISGGSSKNDYKEANYYNYFRILEKKQTEEIARKRCGLYSLKNHNNVFVLKEFSIETEINDCSSTSIWTQSYSNDSNTPVEAKYQLPLHPTSVVSNFQIEYQGKVIQGKIKEKEKALEKYNDAIASGGQAFMATKSDDGYFNLTLGNLPPKENVKVRVVISSELGTHTDGQLHYCLHRYMFPSYAFNFNYNVVLKFSIPIKSIDCDGFDVNVNYKENSSKKEAKITSKSQHTSGVKKNIILIIQPVELNEPKSMIEYIGGGDDKSYATAINFYPSFKNVNPDEVYQKSEFIFLIDCSGSMSGQSINKARRAMEIIIRSLNEQHKVNIYCFGSSFNKVFDKSRVYNDETLEIAGSFVEKISANLGGTELLPPMVDILSSPNDPEYPRQVFILTDGEISERDKLIDYVAKEANTTRIFTYGIGASVDQELVIGLSKACKGYYEMIKETTNMEKQVMKLLNVAFEPMLSNIKLDWSSCGLVDVIQAPSHIRPLFNQERMMIYSMIPSNQTNQDIINASIETSKPLIITLTGDGPKGNVLSFPITLDFKNDLSTNSNQIHTLAAFKHIQDLEESERKEKKDNKDKIVELGKKYGLVSKHTSYIVTADSDNVTEETMKTVDIMNQSPPIRPGGRIVSRGGGRSGASGALSSSILSRKRSSSPSTATKRSSSSSFSSSYLSLSSSSQKKKKEVSRSDDDDDDEKIENCVESYESDGGDQSSEQDEEEEDDCDDFHEDLDEDLGATAMDVDKKECEKECKKKDSSKVDLKVKPSKVPLPSRSPSVSKPTTTSLLSPSPKSAPSAPSQQKSVKSTGDLLIDLLKIQKSNGSWTKSSIDQLKIPTDKAPAELSTTELNDIWVTIIVIAKIVKFFSSEKAQYELAIQKSTRWVKLQLSKLNLPENTFDKFLSNAKSLV.

In terms of domain architecture, VIT spans 44-172; it reads KRCGLYSLKN…NVKVRVVISS (129 aa). The VWFA domain occupies 299-467; it reads EFIFLIDCSG…NMEKQVMKLL (169 aa). The segment at 625–814 is disordered; that stretch reads VDIMNQSPPI…PSAPSQQKSV (190 aa). Over residues 650-690 the composition is skewed to low complexity; it reads ASGALSSSILSRKRSSSPSTATKRSSSSSFSSSYLSLSSSS. Positions 716–746 are enriched in acidic residues; the sequence is YESDGGDQSSEQDEEEEDDCDDFHEDLDEDL. Residues 752-774 are compositionally biased toward basic and acidic residues; that stretch reads DVDKKECEKECKKKDSSKVDLKV. Residues 777–814 show a composition bias toward low complexity; the sequence is SKVPLPSRSPSVSKPTTTSLLSPSPKSAPSAPSQQKSV.

In Dictyostelium discoideum (Social amoeba), this protein is von Willebrand factor A domain-containing protein DDB_G0292016.